The primary structure comprises 429 residues: GTPase Obg (429 aa).

An Obg domain is found at 1–158; it reads MFVDQVKIYV…RNVQLELKVL (158 aa). The tract at residues 124 to 145 is disordered; that stretch reads RGNKRFATPANPAPELSENGEP. In terms of domain architecture, OBG-type G spans 159–329; that stretch reads ADVGLVGFPS…LLLAIADKLE (171 aa). GTP contacts are provided by residues 165–172, 190–194, 212–215, 282–285, and 310–312; these read GFPSVGKS, FTTIV, DLPG, NKMD, and SAV. Positions 172 and 192 each coordinate Mg(2+). In terms of domain architecture, OCT spans 351-429; that stretch reads KYVADEPDFE…LLDYEFEFMD (79 aa).

The protein belongs to the TRAFAC class OBG-HflX-like GTPase superfamily. OBG GTPase family. In terms of assembly, monomer. It depends on Mg(2+) as a cofactor.

It is found in the cytoplasm. In terms of biological role, an essential GTPase which binds GTP, GDP and possibly (p)ppGpp with moderate affinity, with high nucleotide exchange rates and a fairly low GTP hydrolysis rate. Plays a role in control of the cell cycle, stress response, ribosome biogenesis and in those bacteria that undergo differentiation, in morphogenesis control. This chain is GTPase Obg, found in Listeria monocytogenes serotype 4a (strain HCC23).